The primary structure comprises 119 residues: NADH dehydrogenase [ubiquinone] 1 subunit C2 (119 aa).

A helical transmembrane segment spans residues 56-75; the sequence is GLHRQLLYITAFFFAGYYLV.

It belongs to the complex I NDUFC2 subunit family. In terms of assembly, complex I is composed of 45 different subunits. Interacts with TMEM242.

It is found in the mitochondrion inner membrane. Functionally, accessory subunit of the mitochondrial membrane respiratory chain NADH dehydrogenase (Complex I), that is believed not to be involved in catalysis but required for the complex assembly. Complex I functions in the transfer of electrons from NADH to the respiratory chain. The immediate electron acceptor for the enzyme is believed to be ubiquinone. This is NADH dehydrogenase [ubiquinone] 1 subunit C2 from Pan troglodytes (Chimpanzee).